The chain runs to 579 residues: Aspartate--tRNA(Asp/Asn) ligase (579 aa).

Position 171 (glutamate 171) interacts with L-aspartate. An aspartate region spans residues 195 to 198; sequence QLFK. An L-aspartate-binding site is contributed by arginine 217. Residues 217 to 219 and glutamine 226 contribute to the ATP site; that span reads RDE. Position 444 (histidine 444) interacts with L-aspartate. Glutamate 475 contributes to the ATP binding site. Arginine 482 provides a ligand contact to L-aspartate. Position 527 to 530 (527 to 530) interacts with ATP; the sequence is GLDR.

The protein belongs to the class-II aminoacyl-tRNA synthetase family. Type 1 subfamily. As to quaternary structure, homodimer.

It localises to the cytoplasm. The enzyme catalyses tRNA(Asx) + L-aspartate + ATP = L-aspartyl-tRNA(Asx) + AMP + diphosphate. Its function is as follows. Aspartyl-tRNA synthetase with relaxed tRNA specificity since it is able to aspartylate not only its cognate tRNA(Asp) but also tRNA(Asn). Reaction proceeds in two steps: L-aspartate is first activated by ATP to form Asp-AMP and then transferred to the acceptor end of tRNA(Asp/Asn). The chain is Aspartate--tRNA(Asp/Asn) ligase from Thermotoga neapolitana (strain ATCC 49049 / DSM 4359 / NBRC 107923 / NS-E).